Here is a 313-residue protein sequence, read N- to C-terminus: Putative S-adenosyl-L-methionine-dependent methyltransferase MAV_4573 (313 aa).

S-adenosyl-L-methionine contacts are provided by residues aspartate 129 and 158–159 (DL).

It belongs to the UPF0677 family.

In terms of biological role, exhibits S-adenosyl-L-methionine-dependent methyltransferase activity. This Mycobacterium avium (strain 104) protein is Putative S-adenosyl-L-methionine-dependent methyltransferase MAV_4573.